The sequence spans 334 residues: Sterol 4-C-methyltransferase strm-1 (334 aa).

This sequence belongs to the class I-like SAM-binding methyltransferase superfamily. Erg6/SMT family. In terms of tissue distribution, expressed in the pharynx and hypodermal syncytium.

The catalysed reaction is 5alpha-cholest-7-en-3-one + S-adenosyl-L-methionine = 4alpha-methyl-5alpha-cholest-7-en-3-one + S-adenosyl-L-homocysteine + H(+). The protein operates within steroid hormone biosynthesis; dafachronic acid biosynthesis. In terms of biological role, catalyzes the methyl transfer from S-adenosyl-methionine to the C-4 of the A-ring sterols such as lathosterone (5alpha-cholest-7-en-3-one) thereby rendering them unsuitable as ligand precursors. May irreversibly shunt sterols away from hormone dafachronic acid production. Dafachronic acids act as ligands and bind directly to the nuclear hormone receptor (NHR) daf-12 suppressing dauer formation and inducing reproductive growth. By reducing the biosynthesis of dafachronic acids, this methyltransferase can regulate dauer larva formation. The sequence is that of Sterol 4-C-methyltransferase strm-1 (strm-1) from Caenorhabditis elegans.